Consider the following 160-residue polypeptide: 2-amino-4-hydroxy-6-hydroxymethyldihydropteridine pyrophosphokinase (160 aa).

This sequence belongs to the HPPK family.

The catalysed reaction is 6-hydroxymethyl-7,8-dihydropterin + ATP = (7,8-dihydropterin-6-yl)methyl diphosphate + AMP + H(+). Its pathway is cofactor biosynthesis; tetrahydrofolate biosynthesis; 2-amino-4-hydroxy-6-hydroxymethyl-7,8-dihydropteridine diphosphate from 7,8-dihydroneopterin triphosphate: step 4/4. Catalyzes the transfer of pyrophosphate from adenosine triphosphate (ATP) to 6-hydroxymethyl-7,8-dihydropterin, an enzymatic step in folate biosynthesis pathway. The polypeptide is 2-amino-4-hydroxy-6-hydroxymethyldihydropteridine pyrophosphokinase (folK) (Aquifex aeolicus (strain VF5)).